The sequence spans 660 residues: Bifunctional polymyxin resistance protein ArnA (660 aa).

The segment at 1–304 (MKAVIFAYHD…TLGLVAGARL (304 aa)) is formyltransferase ArnAFT. The active-site Proton donor; for formyltransferase activity is the His-104. (6R)-10-formyltetrahydrofolate-binding positions include Arg-114 and 136 to 140 (VKRAD). Residues 314-660 (RRIRVLILGV…RSVDVAERAS (347 aa)) are dehydrogenase ArnADH. NAD(+) is bound by residues Asp-347 and 368–369 (DI). UDP-alpha-D-glucuronate contacts are provided by residues Ala-393, Tyr-398, and 432-433 (TS). Glu-434 functions as the Proton acceptor; for decarboxylase activity in the catalytic mechanism. Residues Arg-460, Asn-492, 526–535 (KLIDGGQQKR), and Tyr-613 contribute to the UDP-alpha-D-glucuronate site. The active-site Proton donor; for decarboxylase activity is Arg-619.

In the N-terminal section; belongs to the Fmt family. UDP-L-Ara4N formyltransferase subfamily. The protein in the C-terminal section; belongs to the NAD(P)-dependent epimerase/dehydratase family. UDP-glucuronic acid decarboxylase subfamily. As to quaternary structure, homohexamer, formed by a dimer of trimers.

It carries out the reaction UDP-alpha-D-glucuronate + NAD(+) = UDP-beta-L-threo-pentopyranos-4-ulose + CO2 + NADH. The enzyme catalyses UDP-4-amino-4-deoxy-beta-L-arabinose + (6R)-10-formyltetrahydrofolate = UDP-4-deoxy-4-formamido-beta-L-arabinose + (6S)-5,6,7,8-tetrahydrofolate + H(+). It functions in the pathway nucleotide-sugar biosynthesis; UDP-4-deoxy-4-formamido-beta-L-arabinose biosynthesis; UDP-4-deoxy-4-formamido-beta-L-arabinose from UDP-alpha-D-glucuronate: step 1/3. It participates in nucleotide-sugar biosynthesis; UDP-4-deoxy-4-formamido-beta-L-arabinose biosynthesis; UDP-4-deoxy-4-formamido-beta-L-arabinose from UDP-alpha-D-glucuronate: step 3/3. Its pathway is bacterial outer membrane biogenesis; lipopolysaccharide biosynthesis. Its function is as follows. Bifunctional enzyme that catalyzes the oxidative decarboxylation of UDP-glucuronic acid (UDP-GlcUA) to UDP-4-keto-arabinose (UDP-Ara4O) and the addition of a formyl group to UDP-4-amino-4-deoxy-L-arabinose (UDP-L-Ara4N) to form UDP-L-4-formamido-arabinose (UDP-L-Ara4FN). The modified arabinose is attached to lipid A and is required for resistance to polymyxin and cationic antimicrobial peptides. This is Bifunctional polymyxin resistance protein ArnA from Salmonella dublin (strain CT_02021853).